We begin with the raw amino-acid sequence, 1520 residues long: DNA-directed RNA polymerase subunit beta'' (1520 aa).

Zn(2+) contacts are provided by Cys220, Cys296, Cys303, and Cys306. Composition is skewed to basic and acidic residues over residues 645–654 (TREEEYRTRE) and 664–674 (PENKYRTREGE). Disordered regions lie at residues 645 to 676 (TREE…GEGE) and 705 to 786 (YRTL…KKEG). Acidic residues-rich tracts occupy residues 730–748 (GEYE…SSED) and 756–779 (TLEE…PEED).

The protein belongs to the RNA polymerase beta' chain family. RpoC2 subfamily. In plastids the minimal PEP RNA polymerase catalytic core is composed of four subunits: alpha, beta, beta', and beta''. When a (nuclear-encoded) sigma factor is associated with the core the holoenzyme is formed, which can initiate transcription. Zn(2+) serves as cofactor.

It localises to the plastid. The protein resides in the chloroplast. It carries out the reaction RNA(n) + a ribonucleoside 5'-triphosphate = RNA(n+1) + diphosphate. In terms of biological role, DNA-dependent RNA polymerase catalyzes the transcription of DNA into RNA using the four ribonucleoside triphosphates as substrates. This is DNA-directed RNA polymerase subunit beta'' from Sorghum bicolor (Sorghum).